The chain runs to 82 residues: Envelope small membrane protein (82 aa).

Residues 1 to 19 are Virion surface-facing; sequence MTFPRAFTIIDDHGMVVSV. A helical transmembrane segment spans residues 20–40; it reads FFWLLLIIILILFSIALLNVI. Residues 41–82 lie on the Intravirion side of the membrane; the sequence is KLCMVCCNLGKTIIVLPARHAYDAYKTFMQTKAYNPDEAFLV.

It belongs to the alphacoronaviruses E protein family. As to quaternary structure, homopentamer. Interacts with membrane protein M in the budding compartment of the host cell, which is located between endoplasmic reticulum and the Golgi complex. Interacts with Nucleoprotein.

It is found in the host Golgi apparatus membrane. In terms of biological role, plays a central role in virus morphogenesis and assembly. Acts as a viroporin and self-assembles in host membranes forming pentameric protein-lipid pores that allow ion transport. Also plays a role in the induction of apoptosis. This chain is Envelope small membrane protein, found in Feline coronavirus (strain FIPV WSU-79/1146) (FCoV).